A 659-amino-acid chain; its full sequence is MFAKRFKTSLLPLFAGFLLLFHLVLAGPAAASAETANKSNELTAPSIKSGTILHAWNWSFNTLKHNMKDIHDAGYTAIQTSPINQVKEGNQGDKSMSNWYWLYQPTSYQIGNRYLGTEQEFKEMCAAAEEYGIKVIVDAVINHTTSDYAAISNEVKSIPNWTHGNTQIKNWSDRWDVTQNSLLGLYDWNTQNTQVQSYLKRFLDRALNDGADGFRFDAAKHIELPDDGSYGSQFWPNITNTSAEFQYGEILQDSASRDAAYANYMDVTASNYGHSIRSALKNRNLGVSNISHYASDVSADKLVTWVESHDTYANDDEESTWMSDDDIRLGWAVIASRSGSTPLFFSRPEGGGNGVRFPGKSQIGDRGSALFEDQAITAVNRFHNVMAGQPEELSNPNGNNQIFMNQRGSHGVVLANAGSSSVSINTATKLPDGRYDNKAGAGSFQVNDGKLTGTINARSVAVLYPDDIAKAPHVFLENYKTGVTHSFNDQLTITLRADANTTKAVYQINNGPETAFKDGDQFTIGKGDPFGKTYTIMLKGTNSDGVTRTEKYSFVKRDPASAKTIGYQNPNHWSQVNAYIYKHDGSRVIELTGSWPGKPMTKNADGIYTLTLPADTDTTNAKVIFNNGSAQVPGQNQPGFDYVLNGLYNDSGLSGSLPH.

Positions 1-27 are cleaved as a signal peptide; that stretch reads MFAKRFKTSLLPLFAGFLLLFHLVLAG. Residues 28–41 constitute a propeptide that is removed on maturation; sequence PAAASAETANKSNE. 5 residues coordinate Ca(2+): asparagine 142, threonine 178, aspartate 187, glycine 210, and aspartate 212. Aspartate 217 serves as the catalytic Nucleophile. Histidine 221 contributes to the Ca(2+) binding site. Glutamate 249 acts as the Proton donor in catalysis.

The protein belongs to the glycosyl hydrolase 13 family. In terms of assembly, monomer. Requires Ca(2+) as cofactor.

It is found in the secreted. It catalyses the reaction Endohydrolysis of (1-&gt;4)-alpha-D-glucosidic linkages in polysaccharides containing three or more (1-&gt;4)-alpha-linked D-glucose units.. This is Alpha-amylase (amyE) from Bacillus subtilis (strain 168).